The sequence spans 179 residues: Large ribosomal subunit protein uL5 (179 aa).

The protein belongs to the universal ribosomal protein uL5 family. As to quaternary structure, part of the 50S ribosomal subunit; part of the 5S rRNA/L5/L18/L25 subcomplex. Contacts the 5S rRNA and the P site tRNA. Forms a bridge to the 30S subunit in the 70S ribosome.

In terms of biological role, this is one of the proteins that bind and probably mediate the attachment of the 5S RNA into the large ribosomal subunit, where it forms part of the central protuberance. In the 70S ribosome it contacts protein S13 of the 30S subunit (bridge B1b), connecting the 2 subunits; this bridge is implicated in subunit movement. Contacts the P site tRNA; the 5S rRNA and some of its associated proteins might help stabilize positioning of ribosome-bound tRNAs. The protein is Large ribosomal subunit protein uL5 of Buchnera aphidicola subsp. Acyrthosiphon kondoi (Acyrthosiphon kondoi symbiotic bacterium).